A 351-amino-acid polypeptide reads, in one-letter code: Fe(3+) ions import ATP-binding protein FbpC (351 aa).

In terms of domain architecture, ABC transporter spans 7-241; that stretch reads LTVKNLNKFF…PNHLETAKFM (235 aa). An ATP-binding site is contributed by 39 to 46; sequence GASGCGKT.

It belongs to the ABC transporter superfamily. Fe(3+) ion importer (TC 3.A.1.10) family. In terms of assembly, the complex is composed of two ATP-binding proteins (FbpC), two transmembrane proteins (FbpB) and a solute-binding protein (FbpA).

It is found in the cell inner membrane. The catalysed reaction is Fe(3+)(out) + ATP + H2O = Fe(3+)(in) + ADP + phosphate + H(+). Part of the ABC transporter complex FbpABC involved in Fe(3+) ions import. Responsible for energy coupling to the transport system. In Haemophilus influenzae (strain 86-028NP), this protein is Fe(3+) ions import ATP-binding protein FbpC.